The chain runs to 102 residues: Small ribosomal subunit protein uS10 (102 aa).

The protein belongs to the universal ribosomal protein uS10 family. In terms of assembly, part of the 30S ribosomal subunit.

Functionally, involved in the binding of tRNA to the ribosomes. The polypeptide is Small ribosomal subunit protein uS10 (Mesorhizobium japonicum (strain LMG 29417 / CECT 9101 / MAFF 303099) (Mesorhizobium loti (strain MAFF 303099))).